The primary structure comprises 396 residues: Elongation factor Tu (396 aa).

In terms of domain architecture, tr-type G spans 10–206 (KPHCNIGTIG…AVDAYIPQPE (197 aa)). The interval 19–26 (GHVDHGKT) is G1. 19 to 26 (GHVDHGKT) serves as a coordination point for GTP. A Mg(2+)-binding site is contributed by Thr-26. The segment at 60-64 (GITIS) is G2. Positions 81–84 (DCPG) are G3. Residues 81–85 (DCPGH) and 136–139 (NKCD) each bind GTP. A G4 region spans residues 136 to 139 (NKCD). The tract at residues 174-176 (SAL) is G5.

The protein belongs to the TRAFAC class translation factor GTPase superfamily. Classic translation factor GTPase family. EF-Tu/EF-1A subfamily. Monomer.

It is found in the cytoplasm. The enzyme catalyses GTP + H2O = GDP + phosphate + H(+). Its function is as follows. GTP hydrolase that promotes the GTP-dependent binding of aminoacyl-tRNA to the A-site of ribosomes during protein biosynthesis. This Rhodopseudomonas palustris (strain BisB18) protein is Elongation factor Tu.